Here is a 293-residue protein sequence, read N- to C-terminus: Probable xyloglucan endotransglucosylase/hydrolase protein 7 (293 aa).

Positions 1 to 29 are cleaved as a signal peptide; that stretch reads MVVSLFSSRNVFYTLSLCLFAALYQPVMS. In terms of domain architecture, GH16 spans 30–223; the sequence is RPAKFEDDFR…WSRAPFYAYY (194 aa). The active-site Nucleophile is Glu109. The Proton donor role is filled by Glu113. Glu113 provides a ligand contact to xyloglucan. An N-linked (GlcNAc...) asparagine glycan is attached at Asn117. Xyloglucan contacts are provided by residues 126–128, 136–138, 202–203, and Gly207; these read QTN, DRE, and DW. A glycan (N-linked (GlcNAc...) asparagine) is linked at Asn213. Cystine bridges form between Cys231/Cys239 and Cys276/Cys289. Arg281 is a binding site for xyloglucan.

It belongs to the glycosyl hydrolase 16 family. XTH group 1 subfamily. Contains at least one intrachain disulfide bond essential for its enzymatic activity.

It is found in the secreted. The protein resides in the cell wall. It localises to the extracellular space. Its subcellular location is the apoplast. It catalyses the reaction breaks a beta-(1-&gt;4) bond in the backbone of a xyloglucan and transfers the xyloglucanyl segment on to O-4 of the non-reducing terminal glucose residue of an acceptor, which can be a xyloglucan or an oligosaccharide of xyloglucan.. In terms of biological role, catalyzes xyloglucan endohydrolysis (XEH) and/or endotransglycosylation (XET). Cleaves and religates xyloglucan polymers, an essential constituent of the primary cell wall, and thereby participates in cell wall construction of growing tissues. The protein is Probable xyloglucan endotransglucosylase/hydrolase protein 7 (XTH7) of Arabidopsis thaliana (Mouse-ear cress).